A 285-amino-acid chain; its full sequence is MTKKIILPSPAKLNLFLYITNKRADGYHELQTLFQFLDFGDDISLEVNESGEIELLNAIEGVAKEQNLIYRAAKLLQNHTACSKGAKIGVTKRLPMGGGVGGGSSNAATVLVGLNHFWQTGLSLEQLAELGLSLGADVPIFVRGFAAFAEGVGEKLVACQPRESWYVVLKPNVSISTAAVFQDPNLPRNTPKRTLSRLLSEEWTNDCEKVVRDHYFEVEDLIAELLQYATFRLTGTGACIFAEFESEAEAKAVFAHKPHNIFGFIAKGQNRSPLHQMLNLTTFPQ.

K12 is an active-site residue. Position 95-105 (95-105) interacts with ATP; the sequence is PMGGGVGGGSS. The active site involves D137.

The protein belongs to the GHMP kinase family. IspE subfamily.

It carries out the reaction 4-CDP-2-C-methyl-D-erythritol + ATP = 4-CDP-2-C-methyl-D-erythritol 2-phosphate + ADP + H(+). The protein operates within isoprenoid biosynthesis; isopentenyl diphosphate biosynthesis via DXP pathway; isopentenyl diphosphate from 1-deoxy-D-xylulose 5-phosphate: step 3/6. Its function is as follows. Catalyzes the phosphorylation of the position 2 hydroxy group of 4-diphosphocytidyl-2C-methyl-D-erythritol. The sequence is that of 4-diphosphocytidyl-2-C-methyl-D-erythritol kinase from Actinobacillus pleuropneumoniae serotype 3 (strain JL03).